Consider the following 643-residue polypeptide: Chromosomal replication initiator protein DnaA (643 aa).

Residues 1–97 form a domain I, interacts with DnaA modulators region; it reads MADVPADLAA…VDDSAGEPPP (97 aa). A disordered region spans residues 87 to 303; that stretch reads TVDDSAGEPP…ASGPGEPTAR (217 aa). Positions 97-302 are domain II; it reads PAAPPAQQTP…PASGPGEPTA (206 aa). Residues 195–209 show a composition bias toward polar residues; sequence SPSSQDAYGSPSQDY. Positions 222–269 are enriched in basic and acidic residues; sequence QRGDYDTPRAEYEPARPDYDSARPDYESARPEYDQRDPVRRELPEPPA. Positions 291–300 are enriched in low complexity; sequence PAPASGPGEP. Residues 303 to 519 form a domain III, AAA+ region region; the sequence is RLNPKYLFDT…GALIRVTAFA (217 aa). Positions 347, 349, 350, and 351 each coordinate ATP. Residues 520–643 form a domain IV, binds dsDNA region; that stretch reads SLNRQPVDLG…TELTNRIKNG (124 aa).

It belongs to the DnaA family. In terms of assembly, oligomerizes as a right-handed, spiral filament on DNA at oriC.

The protein resides in the cytoplasm. Functionally, plays an essential role in the initiation and regulation of chromosomal replication. ATP-DnaA binds to the origin of replication (oriC) to initiate formation of the DNA replication initiation complex once per cell cycle. Binds the DnaA box (a 9 base pair repeat at the origin) and separates the double-stranded (ds)DNA. Forms a right-handed helical filament on oriC DNA; dsDNA binds to the exterior of the filament while single-stranded (ss)DNA is stabiized in the filament's interior. The ATP-DnaA-oriC complex binds and stabilizes one strand of the AT-rich DNA unwinding element (DUE), permitting loading of DNA polymerase. After initiation quickly degrades to an ADP-DnaA complex that is not apt for DNA replication. Binds acidic phospholipids. The sequence is that of Chromosomal replication initiator protein DnaA from Streptomyces reticuli.